A 308-amino-acid polypeptide reads, in one-letter code: Protoheme IX farnesyltransferase (308 aa).

Helical transmembrane passes span 20 to 40, 53 to 73, 102 to 122, 124 to 144, 149 to 169, 170 to 190, 227 to 249, 254 to 276, and 288 to 308; these read VLAY…VTAI, PLLI…ANTF, NALV…WWTT, LLSG…YTLL, TSQN…IGWS, AITD…FFWT, LIYT…WLYM, VAGA…GEPV, and YLAV…PTLF.

This sequence belongs to the UbiA prenyltransferase family. Protoheme IX farnesyltransferase subfamily.

The protein resides in the cell membrane. The enzyme catalyses heme b + (2E,6E)-farnesyl diphosphate + H2O = Fe(II)-heme o + diphosphate. It participates in porphyrin-containing compound metabolism; heme O biosynthesis; heme O from protoheme: step 1/1. Converts heme B (protoheme IX) to heme O by substitution of the vinyl group on carbon 2 of heme B porphyrin ring with a hydroxyethyl farnesyl side group. This chain is Protoheme IX farnesyltransferase, found in Mycobacterium leprae (strain TN).